A 400-amino-acid chain; its full sequence is Large envelope protein (400 aa).

N-acetylmethionine is present on Met-1. Residue Gly-2 is the site of N-myristoyl glycine; by host attachment. A pre-S1 region spans residues Gly-2–Ala-119. The segment at Gly-2 to Asn-174 is pre-S. Topologically, residues Gly-2–Gly-181 are virion surface; in external conformation. Residues Gly-2–Arg-253 are Intravirion; in internal conformation-facing. Residue Pro-4 is glycosylated (N-linked (GlcNAc...) asparagine). The interval Val-84 to Pro-110 is disordered. Over residues Ser-96–Ser-109 the composition is skewed to polar residues. Residues Met-120–Asn-174 are pre-S2. Residues Leu-182 to Ile-202 traverse the membrane as a helical segment. The Intravirion; in external conformation portion of the chain corresponds to Pro-203–Arg-253. The chain crosses the membrane as a helical span at residues Phe-254–Tyr-274. Residues Gln-275–Ser-348 are Virion surface-facing. N-linked (GlcNAc...) asparagine; by host glycosylation is present at Asn-320. A helical transmembrane segment spans residues Leu-349–Ile-369. The Intravirion portion of the chain corresponds to Trp-370 to Trp-375. The chain crosses the membrane as a helical span at residues Gly-376–Val-398. Residues Ser-399 to Ile-400 lie on the Virion surface side of the membrane.

Belongs to the orthohepadnavirus major surface antigen family. In terms of assembly, in its internal form (Li-HBsAg), interacts with the capsid protein and with the isoform S. Interacts with host chaperone CANX. As to quaternary structure, associates with host chaperone CANX through its pre-S2 N glycan; this association may be essential for isoform M proper secretion. Interacts with isoform L. Interacts with the antigens of satellite virus HDV (HDVAgs); this interaction is required for encapsidation of HDV genomic RNA. Isoform M is N-terminally acetylated by host at a ratio of 90%, and N-glycosylated by host at the pre-S2 region. Post-translationally, myristoylated.

The protein localises to the virion membrane. In terms of biological role, the large envelope protein exists in two topological conformations, one which is termed 'external' or Le-HBsAg and the other 'internal' or Li-HBsAg. In its external conformation the protein attaches the virus to cell receptors and thereby initiating infection. This interaction determines the species specificity and liver tropism. This attachment induces virion internalization predominantly through caveolin-mediated endocytosis. The large envelope protein also assures fusion between virion membrane and endosomal membrane. In its internal conformation the protein plays a role in virion morphogenesis and mediates the contact with the nucleocapsid like a matrix protein. Functionally, the middle envelope protein plays an important role in the budding of the virion. It is involved in the induction of budding in a nucleocapsid independent way. In this process the majority of envelope proteins bud to form subviral lipoprotein particles of 22 nm of diameter that do not contain a nucleocapsid. In Homo sapiens (Human), this protein is Large envelope protein.